The following is a 172-amino-acid chain: MASKWNWSGTKGRRTPRRPYGRPYKSSVPTTRVVVHQSAVLKKDEVVGTEIKPEGDVARYKMKKVMLTCTLRMAPGELVNYLIVKCNSPISSWSAAFTSPALLVKESCQDMITIIAKGKVESNGVAGTDCTKSFNRFIKLGAGITQTQHLYVVLYTSVALKAVLEHRVYVEV.

Residues 1-26 are disordered; it reads MASKWNWSGTKGRRTPRRPYGRPYKS. Basic residues predominate over residues 11–20; sequence KGRRTPRRPY.

This sequence belongs to the nanoviridae capsid protein family.

It localises to the virion. In Faba bean necrotic yellows virus (isolate Egyptian EV1-93) (FBNYV), this protein is Capsid protein (DNA-S).